A 118-amino-acid chain; its full sequence is UPF0342 protein BCG9842_B4422 (118 aa).

This sequence belongs to the UPF0342 family.

This Bacillus cereus (strain G9842) protein is UPF0342 protein BCG9842_B4422.